A 260-amino-acid chain; its full sequence is MNTTHVPEPHRTEQHTENQPHWKKILGIAPFVSIAFPAVMYFILTKDSFKDSPFLKFITVLLPYLHPPVLHLLLLHTNWRKTHKSKHTILYCLVNLLLLAFAVANILSIVALIVDKQKRTDDLLLHSIILPSFFIPPAYLLSTSCCLVPGQIGFTDTGINVIIDILILICPAISLVLVDEKSKYYPYSTAIPSILILVRLFREKCSPPKQSSPPIPTWRVAAFVFILVLAVLVYGLLGSGSIITLYDHFHPPKGADATSS.

This sequence belongs to the UPF0328 family.

The protein is UPF0328 protein ECU07_1870/ECU10_0030 of Encephalitozoon cuniculi (strain GB-M1) (Microsporidian parasite).